Consider the following 427-residue polypeptide: Serine--tRNA ligase (427 aa).

232-234 (TAE) is a binding site for L-serine. 263 to 265 (RSE) is an ATP binding site. Glu286 contributes to the L-serine binding site. Residue 350–353 (EISS) coordinates ATP. Ser385 contributes to the L-serine binding site.

Belongs to the class-II aminoacyl-tRNA synthetase family. Type-1 seryl-tRNA synthetase subfamily. In terms of assembly, homodimer. The tRNA molecule binds across the dimer.

The protein localises to the cytoplasm. The catalysed reaction is tRNA(Ser) + L-serine + ATP = L-seryl-tRNA(Ser) + AMP + diphosphate + H(+). The enzyme catalyses tRNA(Sec) + L-serine + ATP = L-seryl-tRNA(Sec) + AMP + diphosphate + H(+). Its pathway is aminoacyl-tRNA biosynthesis; selenocysteinyl-tRNA(Sec) biosynthesis; L-seryl-tRNA(Sec) from L-serine and tRNA(Sec): step 1/1. Functionally, catalyzes the attachment of serine to tRNA(Ser). Is also able to aminoacylate tRNA(Sec) with serine, to form the misacylated tRNA L-seryl-tRNA(Sec), which will be further converted into selenocysteinyl-tRNA(Sec). This chain is Serine--tRNA ligase, found in Aromatoleum aromaticum (strain DSM 19018 / LMG 30748 / EbN1) (Azoarcus sp. (strain EbN1)).